Here is a 719-residue protein sequence, read N- to C-terminus: Phosphoribosylformylglycinamidine synthase subunit PurL (719 aa).

Residue H47 is part of the active site. Y50 and K89 together coordinate ATP. A Mg(2+)-binding site is contributed by E91. Substrate is bound by residues 92 to 95 (SHNH) and R114. The Proton acceptor role is filled by H93. D115 provides a ligand contact to Mg(2+). Q238 provides a ligand contact to substrate. D266 contacts Mg(2+). 310-312 (ESQ) is a binding site for substrate. Residues D488 and G525 each contribute to the ATP site. A Mg(2+)-binding site is contributed by N526. S528 contributes to the substrate binding site.

The protein belongs to the FGAMS family. In terms of assembly, monomer. Part of the FGAM synthase complex composed of 1 PurL, 1 PurQ and 2 PurS subunits.

Its subcellular location is the cytoplasm. It catalyses the reaction N(2)-formyl-N(1)-(5-phospho-beta-D-ribosyl)glycinamide + L-glutamine + ATP + H2O = 2-formamido-N(1)-(5-O-phospho-beta-D-ribosyl)acetamidine + L-glutamate + ADP + phosphate + H(+). Its pathway is purine metabolism; IMP biosynthesis via de novo pathway; 5-amino-1-(5-phospho-D-ribosyl)imidazole from N(2)-formyl-N(1)-(5-phospho-D-ribosyl)glycinamide: step 1/2. Functionally, part of the phosphoribosylformylglycinamidine synthase complex involved in the purines biosynthetic pathway. Catalyzes the ATP-dependent conversion of formylglycinamide ribonucleotide (FGAR) and glutamine to yield formylglycinamidine ribonucleotide (FGAM) and glutamate. The FGAM synthase complex is composed of three subunits. PurQ produces an ammonia molecule by converting glutamine to glutamate. PurL transfers the ammonia molecule to FGAR to form FGAM in an ATP-dependent manner. PurS interacts with PurQ and PurL and is thought to assist in the transfer of the ammonia molecule from PurQ to PurL. The chain is Phosphoribosylformylglycinamidine synthase subunit PurL from Cereibacter sphaeroides (strain ATCC 17025 / ATH 2.4.3) (Rhodobacter sphaeroides).